Reading from the N-terminus, the 122-residue chain is UPF0738 protein YjbL (122 aa).

Belongs to the UPF0738 family.

In Bacillus subtilis (strain 168), this protein is UPF0738 protein YjbL (yjbL).